Here is a 533-residue protein sequence, read N- to C-terminus: Chromosomal replication initiator protein DnaA (533 aa).

The segment at 1–72 (MNDFWQHCSA…DLARDFWNAP (72 aa)) is domain I, interacts with DnaA modulators. A domain II region spans residues 72–196 (PIEVQFVLDP…EAADSMYERS (125 aa)). The segment at 83–120 (AGQRSPAGATPLAPRAPLPSANPAPVAPGPASAPAVDA) is disordered. Residues 96 to 110 (PRAPLPSANPAPVAP) are compositionally biased toward pro residues. Low complexity predominate over residues 111-120 (GPASAPAVDA). Positions 197–413 (KLNPVLTFDN…GALRKILAYS (217 aa)) are domain III, AAA+ region. Residues Gly241, Gly243, Lys244, and Thr245 each coordinate ATP. The tract at residues 414 to 533 (KFHGREITIE…LHVLEQTLKG (120 aa)) is domain IV, binds dsDNA.

The protein belongs to the DnaA family. Oligomerizes as a right-handed, spiral filament on DNA at oriC.

It localises to the cytoplasm. Its function is as follows. Plays an essential role in the initiation and regulation of chromosomal replication. ATP-DnaA binds to the origin of replication (oriC) to initiate formation of the DNA replication initiation complex once per cell cycle. Binds the DnaA box (a 9 base pair repeat at the origin) and separates the double-stranded (ds)DNA. Forms a right-handed helical filament on oriC DNA; dsDNA binds to the exterior of the filament while single-stranded (ss)DNA is stabiized in the filament's interior. The ATP-DnaA-oriC complex binds and stabilizes one strand of the AT-rich DNA unwinding element (DUE), permitting loading of DNA polymerase. After initiation quickly degrades to an ADP-DnaA complex that is not apt for DNA replication. Binds acidic phospholipids. This is Chromosomal replication initiator protein DnaA from Burkholderia pseudomallei (strain 1710b).